A 362-amino-acid polypeptide reads, in one-letter code: Ribosome-binding ATPase YchF (362 aa).

One can recognise an OBG-type G domain in the interval 3–255 (FKCGIIGLPN…MNEDEQKYFM (253 aa)). 12 to 17 (NVGKST) contributes to the ATP binding site. Mg(2+) contacts are provided by serine 16 and threonine 36. A TGS domain is found at 277–360 (NLITFFTAGI…QDGDIINFLF (84 aa)).

This sequence belongs to the TRAFAC class OBG-HflX-like GTPase superfamily. OBG GTPase family. YchF/OLA1 subfamily. Requires Mg(2+) as cofactor.

Functionally, ATPase that binds to both the 70S ribosome and the 50S ribosomal subunit in a nucleotide-independent manner. This Buchnera aphidicola subsp. Schizaphis graminum (strain Sg) protein is Ribosome-binding ATPase YchF.